A 492-amino-acid chain; its full sequence is Putative protein disulfide-isomerase C1F5.02 (492 aa).

The signal sequence occupies residues 1-22 (MKISNLLAAFLAFSGGFFCASA). Residues 23 to 128 (EVPKVNKEGL…LVKYMRKQLL (106 aa)) enclose the Thioredoxin 1 domain. Active-site nucleophile residues include Cys-51 and Cys-54. Cys-51 and Cys-54 form a disulfide bridge. Residues Asn-161 and Asn-257 are each glycosylated (N-linked (GlcNAc...) asparagine). Residues 323–462 (ELTAKAMTKF…LSAFIDKHAS (140 aa)) enclose the Thioredoxin 2 domain. Catalysis depends on nucleophile residues Cys-385 and Cys-388. The cysteines at positions 385 and 388 are disulfide-linked. A disordered region spans residues 468 to 492 (KEKESVPAPDLEDQVAVEDEMADEL). A compositionally biased stretch (acidic residues) spans 477-492 (DLEDQVAVEDEMADEL). Residues 489–492 (ADEL) carry the Prevents secretion from ER motif.

The protein belongs to the protein disulfide isomerase family.

The protein localises to the endoplasmic reticulum lumen. It carries out the reaction Catalyzes the rearrangement of -S-S- bonds in proteins.. In terms of biological role, participates in the folding of proteins containing disulfide bonds, may be involved in glycosylation, prolyl hydroxylation and triglyceride transfer. This is Putative protein disulfide-isomerase C1F5.02 from Schizosaccharomyces pombe (strain 972 / ATCC 24843) (Fission yeast).